Reading from the N-terminus, the 401-residue chain is Succinyl-diaminopimelate desuccinylase (401 aa).

Position 71 (H71) interacts with Zn(2+). D73 is a catalytic residue. Position 104 (D104) interacts with Zn(2+). The active-site Proton acceptor is E138. Residues E139, E167, and H352 each coordinate Zn(2+).

It belongs to the peptidase M20A family. DapE subfamily. As to quaternary structure, homodimer. The cofactor is Zn(2+). Co(2+) serves as cofactor.

It carries out the reaction N-succinyl-(2S,6S)-2,6-diaminopimelate + H2O = (2S,6S)-2,6-diaminopimelate + succinate. It functions in the pathway amino-acid biosynthesis; L-lysine biosynthesis via DAP pathway; LL-2,6-diaminopimelate from (S)-tetrahydrodipicolinate (succinylase route): step 3/3. Functionally, catalyzes the hydrolysis of N-succinyl-L,L-diaminopimelic acid (SDAP), forming succinate and LL-2,6-diaminopimelate (DAP), an intermediate involved in the bacterial biosynthesis of lysine and meso-diaminopimelic acid, an essential component of bacterial cell walls. In Wolbachia sp. subsp. Brugia malayi (strain TRS), this protein is Succinyl-diaminopimelate desuccinylase.